Consider the following 293-residue polypeptide: Elongation factor Ts (293 aa).

The interval Thr-80–Val-83 is involved in Mg(2+) ion dislocation from EF-Tu.

The protein belongs to the EF-Ts family.

It localises to the cytoplasm. Its function is as follows. Associates with the EF-Tu.GDP complex and induces the exchange of GDP to GTP. It remains bound to the aminoacyl-tRNA.EF-Tu.GTP complex up to the GTP hydrolysis stage on the ribosome. In Janthinobacterium sp. (strain Marseille) (Minibacterium massiliensis), this protein is Elongation factor Ts.